The sequence spans 372 residues: Ca(2+)/H(+) antiporter (372 aa).

Helical transmembrane passes span 7–27 (IFLVLLVFCPLSFAAHWLGWG), 29–49 (TTVFILAGLAIVPLAAFMGTA), 62–82 (GGLLNATFGNATELILAYIAL), 94–114 (LTGSIIGNLLLVMGFAVFLGG), 134–154 (MNLGVVAILLPTALQYTSTGV), 162–182 (LSVAVAVVLIGVYLLSLVFSM), 222–242 (LWTGVLLVVTLGVAVESELLV), 251–271 (SLGLTALFTGVIVLPIIGNAA), 294–314 (GSSLQIAFFVAPVLVIVGWAI), 320–340 (LNFNPFELVAVLVAVLIVNSI), and 352–372 (ILLLATYAIVALAFFFHPTLV).

The protein belongs to the Ca(2+):cation antiporter (CaCA) (TC 2.A.19) family. Cation/proton exchanger (CAX) subfamily.

It is found in the cell inner membrane. Functionally, ca(+)/H(+) antiporter that extrudes calcium in exchange for external protons. Plays an important role in salt tolerance. Does not transport sodium or lithium. The polypeptide is Ca(2+)/H(+) antiporter (Synechocystis sp. (strain ATCC 27184 / PCC 6803 / Kazusa)).